The primary structure comprises 846 residues: Envelope glycoprotein gp160 (846 aa).

Positions 1-21 (MSGKIQLLVAFLLTSACLIYC) are cleaved as a signal peptide. The Extracellular portion of the chain corresponds to 22–671 (TKYVTVFYGV…LTSWIKYIQY (650 aa)). N36 carries N-linked (GlcNAc...) asparagine; by host glycosylation. Residues C43 and C56 are joined by a disulfide bond. Residues N69, N113, N132, N142, N157, N184, N197, N229, N232, N239, N263, N269, N280, N291, N301, N357, N363, N390, N400, N455, and N458 are each glycosylated (N-linked (GlcNAc...) asparagine; by host). Disulfide bonds link C100–C205, C107–C196, C112–C154, C218–C248, and C228–C240. Positions 112–153 (CNASTESAVATTSPSGPDMINDTDPCIQLNNCSGLREEDMVE) are V1. The segment at 154-196 (CQFNMTGLELDKKKQYSETWYSKDVVCESDNSTDRKRCYMNHC) is V2. The V3 stretch occupies residues 296 to 329 (CRRPENKTVVPITLMSGRRFHSQKIINKKPRQAW). C296 and C330 are joined by a disulfide. Disulfide bonds link C382–C438 and C389–C411. The tract at residues 389–411 (CNMTWFLNWVENKTGQQHNYVPC) is V4. The interval 454-461 (DNRTNITF) is V5. The interval 504–524 (GVLVLGFLGFLTTAGAAMGAA) is fusion peptide. Residues 567–583 (LQARVTAIEKYLADQAR) are immunosuppression. 3 N-linked (GlcNAc...) asparagine; by host glycosylation sites follow: N603, N612, and N628. The stretch at 616–643 (QEWEHKIRFLEANISESLEQAQIQQEKN) forms a coiled coil. The tract at residues 649–670 (KLNSWDVFGNWFDLTSWIKYIQ) is MPER; binding to GalCer. The helical transmembrane segment at 672–692 (GVMIVVGIVALRIVIYVVQML) threads the bilayer. Residues 693-846 (SRLRKGYRPV…IRQGAEIALL (154 aa)) are Cytoplasmic-facing. Positions 699–702 (YRPV) match the YXXV motif; contains endocytosis signal motif. The S-palmitoyl cysteine; by host moiety is linked to residue C765. Positions 845–846 (LL) match the Di-leucine internalization motif motif.

In terms of assembly, the mature envelope protein (Env) consists of a homotrimer of non-covalently associated gp120-gp41 heterodimers. The resulting complex protrudes from the virus surface as a spike. There seems to be as few as 10 spikes on the average virion. Interacts with human CD4, CCR5 and CXCR4, to form a P4HB/PDI-CD4-CXCR4-gp120 complex. Gp120 also interacts with the C-type lectins CD209/DC-SIGN and CLEC4M/DC-SIGNR (collectively referred to as DC-SIGN(R)). Gp120 and gp41 interact with GalCer. The mature envelope protein (Env) consists of a homotrimer of non-covalently associated gp120-gp41 heterodimers. The resulting complex protrudes from the virus surface as a spike. There seems to be as few as 10 spikes on the average virion. Post-translationally, specific enzymatic cleavages in vivo yield mature proteins. Envelope glycoproteins are synthesized as an inactive precursor that is heavily N-glycosylated and processed likely by host cell furin in the Golgi to yield the mature SU and TM proteins. The cleavage site between SU and TM requires the minimal sequence [KR]-X-[KR]-R. Palmitoylation of the transmembrane protein and of Env polyprotein (prior to its proteolytic cleavage) is essential for their association with host cell membrane lipid rafts. Palmitoylation is therefore required for envelope trafficking to classical lipid rafts, but not for viral replication.

It is found in the virion membrane. It localises to the host cell membrane. Its subcellular location is the host endosome membrane. The surface protein gp120 (SU) attaches the virus to the host lymphoid cell by binding to the primary receptor CD4. This interaction induces a structural rearrangement creating a high affinity binding site for a chemokine coreceptor like CXCR4 and/or CCR5. This peculiar 2 stage receptor-interaction strategy allows gp120 to maintain the highly conserved coreceptor-binding site in a cryptic conformation, protected from neutralizing antibodies. Since CD4 also displays a binding site for the disulfide-isomerase P4HB/PDI, a P4HB/PDI-CD4-CXCR4-gp120 complex may form. In that complex, P4HB/PDI could reach and reduce gp120 disulfide bonds, causing major conformational changes in gp120. TXN, another PDI family member could also be involved in disulfide rearrangements in Env during fusion. These changes are transmitted to the transmembrane protein gp41 and are thought to activate its fusogenic potential by unmasking its fusion peptide. Its function is as follows. The surface protein gp120 is a ligand for CD209/DC-SIGN and CLEC4M/DC-SIGNR, which are respectively found on dendritic cells (DCs), and on endothelial cells of liver sinusoids and lymph node sinuses. These interactions allow capture of viral particles at mucosal surfaces by these cells and subsequent transmission to permissive cells. DCs are professional antigen presenting cells, critical for host immunity by inducing specific immune responses against a broad variety of pathogens. They act as sentinels in various tissues where they take up antigen, process it, and present it to T-cells following migration to lymphoid organs. HIV subverts the migration properties of dendritic cells to gain access to CD4+ T-cells in lymph nodes. Virus transmission to permissive T-cells occurs either in trans (without DCs infection, through viral capture and transmission), or in cis (following DCs productive infection, through the usual CD4-gp120 interaction), thereby inducing a robust infection. In trans infection, bound virions remain infectious over days and it is proposed that they are not degraded, but protected in non-lysosomal acidic organelles within the DCs close to the cell membrane thus contributing to the viral infectious potential during DCs' migration from the periphery to the lymphoid tissues. On arrival at lymphoid tissues, intact virions recycle back to DCs' cell surface allowing virus transmission to CD4+ T-cells. Virion capture also seems to lead to MHC-II-restricted viral antigen presentation, and probably to the activation of HIV-specific CD4+ cells. In terms of biological role, the transmembrane protein gp41 (TM) acts as a class I viral fusion protein. Under the current model, the protein has at least 3 conformational states: pre-fusion native state, pre-hairpin intermediate state, and post-fusion hairpin state. During fusion of viral and target intracellular membranes, the coiled coil regions (heptad repeats) assume a trimer-of-hairpins structure, positioning the fusion peptide in close proximity to the C-terminal region of the ectodomain. The formation of this structure appears to drive apposition and subsequent fusion of viral and target cell membranes. Complete fusion occurs in host cell endosomes and is dynamin-dependent, however some lipid transfer might occur at the plasma membrane. The virus undergoes clathrin-dependent internalization long before endosomal fusion, thus minimizing the surface exposure of conserved viral epitopes during fusion and reducing the efficacy of inhibitors targeting these epitopes. Membranes fusion leads to delivery of the nucleocapsid into the cytoplasm. Functionally, the envelope glycoprotein gp160 precursor down-modulates cell surface CD4 antigen by interacting with it in the endoplasmic reticulum and blocking its transport to the cell surface. The gp120-gp41 heterodimer seems to contribute to T-cell depletion during HIV-1 infection. The envelope glycoproteins expressed on the surface of infected cells induce apoptosis through an interaction with uninfected cells expressing the receptor (CD4) and the coreceptors CXCR4 or CCR5. This type of bystander killing may be obtained by at least three distinct mechanisms. First, the interaction between the 2 cells can induce cellular fusion followed by nuclear fusion within the syncytium. Syncytia are condemned to die from apoptosis. Second, the 2 interacting cells may not fuse entirely and simply exchange plasma membrane lipids, after a sort of hemifusion process, followed by rapid death. Third, it is possible that virus-infected cells, on the point of undergoing apoptosis, fuse with CD4-expressing cells, in which case apoptosis is rapidly transmitted from one cell to the other and thus occurs in a sort of contagious fashion. Its function is as follows. The gp120-gp41 heterodimer allows rapid transcytosis of the virus through CD4 negative cells such as simple epithelial monolayers of the intestinal, rectal and endocervical epithelial barriers. Both gp120 and gp41 specifically recognize glycosphingolipids galactosyl-ceramide (GalCer) or 3' sulfo-galactosyl-ceramide (GalS) present in the lipid rafts structures of epithelial cells. Binding to these alternative receptors allows the rapid transcytosis of the virus through the epithelial cells. This transcytotic vesicle-mediated transport of virions from the apical side to the basolateral side of the epithelial cells does not involve infection of the cells themselves. This Human immunodeficiency virus type 2 subtype A (isolate SBLISY) (HIV-2) protein is Envelope glycoprotein gp160 (env).